Reading from the N-terminus, the 739-residue chain is MKMKKQCATLTFFIGLHGYTIAEDNPKNISLSVITVPGHHERQPDRSIITQNEIDQKQSDNVADLVNTVPGVSMAGGFRPSGQTLNIRGMGDTEDIRVQVDGATKNFEKYQQGSLFIEPELLRRVSIDKGNHYPQYGNGGFAGTIKLETKNAKDFLQENQLLGGLLKYGYNTNNNQRTFSGAIFMQNDQKNIDALVYATVRRAHDYKRADKTPIKYSANNQANFLAKVNWWLTPSQLLAFSKVHGNHNGWEPFAAKRDLLPGPTEAEITKYGLDLAWKRKLVAREQQDRSYSLQYQFLPENNPWINTVAQLSHSSTYQHDTRSEQASKTYLASLGNESWTRYTDLTFDVNNTSLFNVAKTSHTLLVGLQWVKHKRQTLIFDPSKLQKAEYNHGYFQPSYMPSGHQYTHAFYAQDKIKIHNLTVSIGARYDYVKNIGKPNIATIYNDPTAGHDYSSKHYPGWSSYLGLNYKLTPYLNLFSNISNTWRAPVIDEQYETQYAKATLSPTASSLDLKKERITQLRVGKQIHFDHILSNNDQLSFNSTFFYYKGKDEIFKTRGVRCFESAQNNNNEVCSKKIGNYRNLPGYQIKGFELEANYDSTYWFTNLSYSHTIGKRLASPRNPWLASTSWIAEIPPRKAVVTLGSHIPDTNLTLGWKSEFVRRQDRSPTDQDKDAGHWALPKSSGYALHGIFATWQPKQIKHLRIQFTVDNLLNRSYRPYLSELAAGTGRNIKLSISKQF.

The N-terminal stretch at 1 to 22 (MKMKKQCATLTFFIGLHGYTIA) is a signal peptide. In terms of domain architecture, TBDR plug spans 38-150 (GHHERQPDRS…FAGTIKLETK (113 aa)). One can recognise a TBDR beta-barrel domain in the interval 161–739 (LLGGLLKYGY…NIKLSISKQF (579 aa)).

Belongs to the TonB-dependent receptor family.

Its subcellular location is the cell outer membrane. In terms of biological role, heme receptor. The chain is TonB-dependent heme receptor A (tdhA) from Haemophilus ducreyi (strain 35000HP / ATCC 700724).